We begin with the raw amino-acid sequence, 492 residues long: AAA-ATPase At3g28520 (492 aa).

The chain crosses the membrane as a helical span at residues 7-25 (IWGFTSTTMASIMFLWPMY). 249 to 256 (GPPGTGKS) contacts ATP. Disordered stretches follow at residues 313-334 (KKKK…LKRV) and 462-492 (KIEK…MVTK). Basic and acidic residues-rich tracts occupy residues 323–332 (EEKKEAENLK) and 462–484 (KIEK…EKQN).

Belongs to the AAA ATPase family. BCS1 subfamily. Mg(2+) is required as a cofactor.

The protein localises to the membrane. The enzyme catalyses ATP + H2O = ADP + phosphate + H(+). The protein is AAA-ATPase At3g28520 of Arabidopsis thaliana (Mouse-ear cress).